The following is a 592-amino-acid chain: Putative amidase ARB_02965 (592 aa).

The first 21 residues, 1–21, serve as a signal peptide directing secretion; sequence MKGPITFLLQLGAVYTSIASA. N-linked (GlcNAc...) asparagine glycosylation is present at asparagine 120. Lysine 161 serves as the catalytic Charge relay system. N-linked (GlcNAc...) asparagine glycosylation occurs at asparagine 217. Serine 242 serves as the catalytic Charge relay system. Substrate contacts are provided by residues serine 242 and 263 to 266; that span reads TSGS. Catalysis depends on serine 266, which acts as the Acyl-ester intermediate. 3 N-linked (GlcNAc...) asparagine glycosylation sites follow: asparagine 326, asparagine 430, and asparagine 528.

The protein belongs to the amidase family.

Its subcellular location is the secreted. The chain is Putative amidase ARB_02965 from Arthroderma benhamiae (strain ATCC MYA-4681 / CBS 112371) (Trichophyton mentagrophytes).